The chain runs to 155 residues: Basic phospholipase A2 PC1 (155 aa).

The first 21 residues, 1–21 (MYPAHLLVLLAVCVSLLGASA), serve as a signal peptide directing secretion. Positions 22-27 (ISNRPR) are excised as a propeptide. 7 disulfide bridges follow: cysteine 38–cysteine 98, cysteine 54–cysteine 144, cysteine 56–cysteine 72, cysteine 71–cysteine 125, cysteine 78–cysteine 118, cysteine 87–cysteine 111, and cysteine 105–cysteine 116. Residues tyrosine 55, glycine 57, and glycine 59 each contribute to the Ca(2+) site. Residue histidine 75 is part of the active site. Aspartate 76 provides a ligand contact to Ca(2+). Aspartate 119 is an active-site residue.

The protein belongs to the phospholipase A2 family. Group I subfamily. D49 sub-subfamily. Requires Ca(2+) as cofactor. Expressed by the venom gland.

The protein resides in the secreted. The enzyme catalyses a 1,2-diacyl-sn-glycero-3-phosphocholine + H2O = a 1-acyl-sn-glycero-3-phosphocholine + a fatty acid + H(+). Snake venom phospholipase A2 (PLA2) that inhibits neuromuscular transmission by blocking acetylcholine release from the nerve termini. PLA2 catalyzes the calcium-dependent hydrolysis of the 2-acyl groups in 3-sn-phosphoglycerides. The chain is Basic phospholipase A2 PC1 from Laticauda colubrina (Yellow-lipped sea krait).